A 134-amino-acid polypeptide reads, in one-letter code: B3 domain-containing protein At1g16640 (134 aa).

Residues 7–100 (VQFMKPFISE…TFYVIIYGHN (94 aa)) constitute a DNA-binding region (TF-B3).

The protein localises to the nucleus. The sequence is that of B3 domain-containing protein At1g16640 from Arabidopsis thaliana (Mouse-ear cress).